Here is a 354-residue protein sequence, read N- to C-terminus: DNA repair protein rhp57 (354 aa).

100–107 (GESGSGKS) provides a ligand contact to ATP.

The protein belongs to the RecA family.

The protein resides in the nucleus. Its function is as follows. Involved in recombination DNA repair and in the repair of gamma-ray-induced damage. The sequence is that of DNA repair protein rhp57 (rhp57) from Schizosaccharomyces pombe (strain 972 / ATCC 24843) (Fission yeast).